Reading from the N-terminus, the 743-residue chain is Phosphoribosylformylglycinamidine synthase subunit PurL (743 aa).

Histidine 50 is an active-site residue. The ATP site is built by tyrosine 53 and lysine 92. Glutamate 94 provides a ligand contact to Mg(2+). Residues 95-98 (SHNH) and arginine 117 each bind substrate. Histidine 96 functions as the Proton acceptor in the catalytic mechanism. Aspartate 118 contributes to the Mg(2+) binding site. Position 241 (glutamine 241) interacts with substrate. Aspartate 269 lines the Mg(2+) pocket. 313–315 (ESQ) contributes to the substrate binding site. ATP-binding residues include aspartate 494 and glycine 531. Asparagine 532 lines the Mg(2+) pocket. Serine 534 serves as a coordination point for substrate.

The protein belongs to the FGAMS family. In terms of assembly, monomer. Part of the FGAM synthase complex composed of 1 PurL, 1 PurQ and 2 PurS subunits.

It is found in the cytoplasm. The catalysed reaction is N(2)-formyl-N(1)-(5-phospho-beta-D-ribosyl)glycinamide + L-glutamine + ATP + H2O = 2-formamido-N(1)-(5-O-phospho-beta-D-ribosyl)acetamidine + L-glutamate + ADP + phosphate + H(+). The protein operates within purine metabolism; IMP biosynthesis via de novo pathway; 5-amino-1-(5-phospho-D-ribosyl)imidazole from N(2)-formyl-N(1)-(5-phospho-D-ribosyl)glycinamide: step 1/2. Its function is as follows. Part of the phosphoribosylformylglycinamidine synthase complex involved in the purines biosynthetic pathway. Catalyzes the ATP-dependent conversion of formylglycinamide ribonucleotide (FGAR) and glutamine to yield formylglycinamidine ribonucleotide (FGAM) and glutamate. The FGAM synthase complex is composed of three subunits. PurQ produces an ammonia molecule by converting glutamine to glutamate. PurL transfers the ammonia molecule to FGAR to form FGAM in an ATP-dependent manner. PurS interacts with PurQ and PurL and is thought to assist in the transfer of the ammonia molecule from PurQ to PurL. The sequence is that of Phosphoribosylformylglycinamidine synthase subunit PurL from Sinorhizobium fredii (strain HH103).